The primary structure comprises 1240 residues: DNA polymerase catalytic subunit (1240 aa).

Positions 1–22 (MFCAAGGPASPGGKPAARAASG) are enriched in low complexity. 3 disordered regions span residues 1–44 (MFCA…RRQN), 646–695 (GLDK…RETG), and 1103–1139 (AAAP…ASKP). Residues 669 to 688 (NGDEDKDDDEDGDEDGDERE) show a composition bias toward acidic residues.

This sequence belongs to the DNA polymerase type-B family. As to quaternary structure, forms a complex with the ssDNA-binding protein UL29, the DNA polymerase processivity factor, and the alkaline exonuclease. Interacts with the putative helicase-primase complex subunit UL8; this interaction may coordinate leading and lagging strand DNA synthesis at the replication fork.

The protein resides in the host nucleus. The catalysed reaction is DNA(n) + a 2'-deoxyribonucleoside 5'-triphosphate = DNA(n+1) + diphosphate. It carries out the reaction Endonucleolytic cleavage to 5'-phosphomonoester.. Replicates viral genomic DNA. The replication complex is composed of six viral proteins: the DNA polymerase, processivity factor, primase, primase-associated factor, helicase, and ssDNA-binding protein. Additionally, the polymerase contains an intrinsic ribonuclease H (RNase H) activity that specifically degrades RNA/DNA heteroduplexes or duplex DNA substrates in the 5' to 3' direction. Therefore, it can catalyze the excision of the RNA primers that initiate the synthesis of Okazaki fragments at a replication fork during viral DNA replication. This Human herpesvirus 2 (strain HG52) (HHV-2) protein is DNA polymerase catalytic subunit.